The primary structure comprises 639 residues: 2-oxoacid:ferredoxin oxidoreductase 1, subunit alpha (639 aa).

The short motif at 266 to 270 (YPITP) is the YPITP motif element. Positions 269 and 352 each coordinate substrate.

As to quaternary structure, heterodimer composed of an alpha and a beta subunit.

It carries out the reaction a 2-oxocarboxylate + 2 oxidized [2Fe-2S]-[ferredoxin] + CoA = an acyl-CoA + 2 reduced [2Fe-2S]-[ferredoxin] + CO2 + H(+). In terms of biological role, catalyzes the coenzyme A-dependent oxidative decarboxylation of different 2-oxoacids such as pyruvate, 2-oxobutyrate and glyoxylate to form their CoA derivatives. The chain is 2-oxoacid:ferredoxin oxidoreductase 1, subunit alpha from Aeropyrum pernix (strain ATCC 700893 / DSM 11879 / JCM 9820 / NBRC 100138 / K1).